Consider the following 332-residue polypeptide: Caffeoylshikimate esterase (332 aa).

Residues Met-1–Pro-13 are compositionally biased toward low complexity. The segment at Met-1–Met-26 is disordered. The active-site Nucleophile is Ser-147. Catalysis depends on charge relay system residues Asp-268 and His-298.

The protein belongs to the AB hydrolase superfamily. Monoacylglycerol lipase family. Interacts with ACBP2. As to expression, expressed in vasculature of roots and leaves, stems, flowers and siliques.

The protein localises to the cell membrane. The catalysed reaction is 5-O-[(E)-caffeoyl]-shikimate + H2O = shikimate + (E)-caffeate + H(+). In terms of biological role, esterase involved in the biosynthesis of lignin. Hydrolyzes caffeoylshikimate into caffeate and shikimate. Together with 4-coumarate--CoA ligase (4CL), acts on an alternative reaction for the formation of caffeoyl-CoA and bypasses the second reaction of shikimate O-hydroxycinnamoyltransferase (HST). Also accepts 4-coumaroylshikimate as substrate, but with lower activity. According to PubMed:20345607 and PubMed:22915575, possesses monoacylglycerol O-acyltransferase, monoacylglycerol lipase and lysophospholipase activities in vitro. With the association of ACBP2, may promote the degradation of lysophosphatidylcholine and detoxify the peroxidized membrane in response to cadmium-induced oxidative stress. However these results require additional confirmation in vivo. This is Caffeoylshikimate esterase (CSE) from Arabidopsis thaliana (Mouse-ear cress).